The primary structure comprises 264 residues: 3-methyl-2-oxobutanoate hydroxymethyltransferase (264 aa).

Mg(2+) contacts are provided by D45 and D84. 3-methyl-2-oxobutanoate contacts are provided by residues 45–46, D84, and K112; that span reads DS. Position 114 (E114) interacts with Mg(2+). E181 functions as the Proton acceptor in the catalytic mechanism.

This sequence belongs to the PanB family. Homodecamer; pentamer of dimers. Requires Mg(2+) as cofactor.

The protein localises to the cytoplasm. The catalysed reaction is 3-methyl-2-oxobutanoate + (6R)-5,10-methylene-5,6,7,8-tetrahydrofolate + H2O = 2-dehydropantoate + (6S)-5,6,7,8-tetrahydrofolate. It functions in the pathway cofactor biosynthesis; (R)-pantothenate biosynthesis; (R)-pantoate from 3-methyl-2-oxobutanoate: step 1/2. Functionally, catalyzes the reversible reaction in which hydroxymethyl group from 5,10-methylenetetrahydrofolate is transferred onto alpha-ketoisovalerate to form ketopantoate. The protein is 3-methyl-2-oxobutanoate hydroxymethyltransferase of Pectobacterium atrosepticum (strain SCRI 1043 / ATCC BAA-672) (Erwinia carotovora subsp. atroseptica).